A 156-amino-acid polypeptide reads, in one-letter code: Large ribosomal subunit protein eL24 (156 aa).

The span at 110 to 123 (RAAKEKQKQKELEK) shows a compositional bias: basic and acidic residues. A disordered region spans residues 110–156 (RAAKEKQKQKELEKKAKKVEKKKPTLAPKQKAAKITQKPAPRVGGKR).

The protein belongs to the eukaryotic ribosomal protein eL24 family.

This chain is Large ribosomal subunit protein eL24 (RPL24), found in Schistosoma japonicum (Blood fluke).